The sequence spans 451 residues: Probable glycine dehydrogenase (decarboxylating) subunit 1 (451 aa).

It belongs to the GcvP family. N-terminal subunit subfamily. As to quaternary structure, the glycine cleavage system is composed of four proteins: P, T, L and H. In this organism, the P 'protein' is a heterodimer of two subunits.

It carries out the reaction N(6)-[(R)-lipoyl]-L-lysyl-[glycine-cleavage complex H protein] + glycine + H(+) = N(6)-[(R)-S(8)-aminomethyldihydrolipoyl]-L-lysyl-[glycine-cleavage complex H protein] + CO2. The glycine cleavage system catalyzes the degradation of glycine. The P protein binds the alpha-amino group of glycine through its pyridoxal phosphate cofactor; CO(2) is released and the remaining methylamine moiety is then transferred to the lipoamide cofactor of the H protein. The chain is Probable glycine dehydrogenase (decarboxylating) subunit 1 from Staphylococcus aureus (strain MSSA476).